We begin with the raw amino-acid sequence, 477 residues long: Glutamate--tRNA ligase (477 aa).

Residues 12–22 (PSPTGMFHVGG) carry the 'HIGH' region motif. 4 residues coordinate Zn(2+): Cys106, Cys108, Cys128, and Asp130. The 'KMSKS' region motif lies at 238-242 (KLSKR). Residue Lys241 coordinates ATP.

It belongs to the class-I aminoacyl-tRNA synthetase family. Glutamate--tRNA ligase type 1 subfamily. In terms of assembly, monomer. Requires Zn(2+) as cofactor.

It is found in the cytoplasm. It catalyses the reaction tRNA(Glu) + L-glutamate + ATP = L-glutamyl-tRNA(Glu) + AMP + diphosphate. Catalyzes the attachment of glutamate to tRNA(Glu) in a two-step reaction: glutamate is first activated by ATP to form Glu-AMP and then transferred to the acceptor end of tRNA(Glu). In Thermobifida fusca (strain YX), this protein is Glutamate--tRNA ligase.